A 639-amino-acid polypeptide reads, in one-letter code: Tetracycline resistance protein TetW (639 aa).

Positions 1–243 (MKIINIGILA…VTGLFQPIGE (243 aa)) constitute a tr-type G domain. GTP-binding positions include 10-17 (AHVDAGKT), 74-78 (DTPGH), and 128-131 (NKID).

It belongs to the TRAFAC class translation factor GTPase superfamily. Classic translation factor GTPase family. TetM/TetO subfamily.

In terms of biological role, abolishes the inhibitory effect of tetracyclin on protein synthesis by a non-covalent modification of the ribosomes. In Butyrivibrio fibrisolvens, this protein is Tetracycline resistance protein TetW (tetW).